A 461-amino-acid polypeptide reads, in one-letter code: DNA polymerase delta subunit 3 (461 aa).

Disordered regions lie at residues 148–229 (VAQA…SAKG), 249–380 (VPGQ…KRVL), and 399–461 (YESE…CQKK). A compositionally biased stretch (polar residues) spans 155 to 172 (ARSSSQTPSDTSAVSTPP). Residues 205–214 (DANKEPKAKE) show a composition bias toward basic and acidic residues. The span at 215-228 (APSVSAASSKPSAK) shows a compositional bias: low complexity. Residues 279–304 (KPGRKTEPAKIQQKDKKSKMKRMDKS) show a composition bias toward basic and acidic residues. Residues 371-380 (GKKRKRKRVL) are compositionally biased toward basic residues. A compositionally biased stretch (basic and acidic residues) spans 427–436 (VKKEPKEERK). Positions 451–458 (QISIMGFC) match the PIP-box motif.

Component of both the DNA polymerase delta and DNA polymerase zeta complexes. The tetrameric DNA polymerase delta complex (Pol-delta4), which consists of POLD1/p125, POLD2/p50, POLD3/p66/p68 and POLD4/p12, with POLD1 bearing DNA polymerase and 3' to 5' proofreading exonuclease activities.

It is found in the cytoplasm. The protein localises to the nucleus. Functionally, accessory component of both the DNA polymerase delta complex and the DNA polymerase zeta complex. As a component of the trimeric and tetrameric DNA polymerase delta complexes (Pol-delta3 and Pol-delta4, respectively), plays a role in high fidelity genome replication, including in lagging strand synthesis, and repair. Required for optimal Pol-delta activity. Stabilizes the Pol-delta complex and plays a major role in Pol-delta stimulation by PCNA. Pol-delta3 and Pol-delta4 are characterized by the absence or the presence of POLD4. They exhibit differences in catalytic activity. Most notably, Pol-delta3 shows higher proofreading activity than Pol-delta4. Although both Pol-delta3 and Pol-delta4 process Okazaki fragments in vitro, Pol-delta3 may also be better suited to fulfill this task, exhibiting near-absence of strand displacement activity compared to Pol-delta4 and stalling on encounter with the 5'-blocking oligonucleotides. Pol-delta3 idling process may avoid the formation of a gap, while maintaining a nick that can be readily ligated. Along with DNA polymerase kappa, DNA polymerase delta carries out approximately half of nucleotide excision repair (NER) synthesis following UV irradiation. In this context, POLD3, along with PCNA and RFC1-replication factor C complex, is required to recruit POLD1, the catalytic subunit of the polymerase delta complex, to DNA damage sites. Under conditions of DNA replication stress, required for the repair of broken replication forks through break-induced replication (BIR). Involved in the translesion synthesis (TLS) of templates carrying O6-methylguanine or abasic sites performed by Pol-delta4, independently of DNA polymerase zeta (REV3L) or eta (POLH). Facilitates abasic site bypass by DNA polymerase delta by promoting extension from the nucleotide inserted opposite the lesion. Also involved in TLS, as a component of the tetrameric DNA polymerase zeta complex. Along with POLD2, dramatically increases the efficiency and processivity of DNA synthesis of the DNA polymerase zeta complex compared to the minimal zeta complex, consisting of only REV3L and REV7. This chain is DNA polymerase delta subunit 3 (POLD3), found in Gallus gallus (Chicken).